Reading from the N-terminus, the 132-residue chain is Small ribosomal subunit protein uS8 (132 aa).

It belongs to the universal ribosomal protein uS8 family. Part of the 30S ribosomal subunit. Contacts proteins S5 and S12.

In terms of biological role, one of the primary rRNA binding proteins, it binds directly to 16S rRNA central domain where it helps coordinate assembly of the platform of the 30S subunit. The sequence is that of Small ribosomal subunit protein uS8 from Natranaerobius thermophilus (strain ATCC BAA-1301 / DSM 18059 / JW/NM-WN-LF).